The following is a 1732-amino-acid chain: Lys-gingipain W83 (1732 aa).

The first 24 residues, 1–24, serve as a signal peptide directing secretion; the sequence is MRKLLLLIAASLLGVGLYAQSAKI. Positions 25–228 are excised as a propeptide; sequence KLDAPTTRTT…ETAYKQLFNR (204 aa). Asp-313, Asp-337, Asp-339, Phe-341, and Glu-343 together coordinate Ca(2+). His-444 acts as the Proton donor in catalysis. The active-site Nucleophile is Cys-477. Phe-482 and Glu-491 together coordinate Ca(2+). The interval 965–988 is disordered; the sequence is DAPNGTPNPNPNPNPNPGTTLSES. The segment covering 970 to 980 has biased composition (pro residues); sequence TPNPNPNPNPN. Ser-988, Glu-990, Asp-1001, Asp-1003, Asp-1005, His-1007, Ser-1022, Gly-1024, Asn-1043, Asp-1146, Glu-1147, Asp-1433, Glu-1435, Asp-1446, Asp-1448, Asp-1450, Asn-1452, Ser-1470, Ile-1472, Asn-1490, and Asp-1595 together coordinate Ca(2+).

The protein belongs to the peptidase C25 family. Post-translationally, proteolytically cleaved into a catalytic subunit and three adhesins. Arg-gingipain is involved in this post-translational processing.

The protein localises to the secreted. It carries out the reaction Endopeptidase with strict specificity for lysyl bonds.. Functionally, cysteine proteinase with a strong preference for substrates with Lys in the P1 position. Hydrolyzes bovine hemoglobin, bovine serum albumin, casein, human placental type I collagen and human IgA and IgG. Disrupts the functions of polymorphonuclear leukocytes. May act as a virulence factor in the development of peridontal disease. Involved in the coaggregation of P.gingivalis with other oral bacteria. Has hemolytic activity; this is mediated by the adhesin domains and does not require the catalytic domain. This Porphyromonas gingivalis (Bacteroides gingivalis) protein is Lys-gingipain W83.